Here is a 239-residue protein sequence, read N- to C-terminus: Non-classical arabinogalactan protein 30 (239 aa).

The first 24 residues, 1–24, serve as a signal peptide directing secretion; sequence MGIIGKSVSLTLFALLCFTSSVFT. N-linked (GlcNAc...) asparagine glycosylation is present at Asn106.

The protein belongs to the non-classical AGP family. Specifically expressed in root tips.

The protein localises to the secreted. It is found in the cell wall. Its function is as follows. Proteoglycan required for the timing of seed germination. May function in the abscisic acid (ABA) response. This Arabidopsis thaliana (Mouse-ear cress) protein is Non-classical arabinogalactan protein 30.